The following is a 1011-amino-acid chain: Probable beta-galactosidase E (1011 aa).

Residues 1-19 (MKSLLKRLIALAAAYSVAA) form the signal peptide. Residues Y92, N136, A137, E138, and N195 each contribute to the substrate site. The active-site Proton donor is E196. An N-linked (GlcNAc...) asparagine glycan is attached at N202. Y261 serves as a coordination point for substrate. A disulfide bridge connects residues C267 and C316. Catalysis depends on E299, which acts as the Nucleophile. Y365 contributes to the substrate binding site. 12 N-linked (GlcNAc...) asparagine glycosylation sites follow: N406, N423, N446, N455, N588, N622, N704, N745, N759, N772, N778, and N913.

Belongs to the glycosyl hydrolase 35 family.

It localises to the secreted. It catalyses the reaction Hydrolysis of terminal non-reducing beta-D-galactose residues in beta-D-galactosides.. In terms of biological role, cleaves beta-linked terminal galactosyl residues from gangliosides, glycoproteins, and glycosaminoglycans. This Aspergillus fumigatus (strain CBS 144.89 / FGSC A1163 / CEA10) (Neosartorya fumigata) protein is Probable beta-galactosidase E (lacE).